A 462-amino-acid chain; its full sequence is Elongation factor 1-alpha 1 (462 aa).

N,N,N-trimethylglycine is present on glycine 2. A tr-type G domain is found at 5 to 242 (KTHINIVVIG…DCILPPTRPT (238 aa)). The G1 stretch occupies residues 14 to 21 (GHVDSGKS). 14–21 (GHVDSGKS) is a GTP binding site. Lysine 36 is modified (N6,N6,N6-trimethyllysine; alternate). Position 36 is an N6,N6-dimethyllysine; alternate (lysine 36). Position 36 is an N6-methyllysine; alternate (lysine 36). Lysine 55 carries the N6,N6-dimethyllysine modification. The segment at 70 to 74 (GITID) is G2. Residue lysine 79 is modified to N6,N6,N6-trimethyllysine; by EEF1AKMT1. A G3 region spans residues 91-94 (DAPG). Position 153–156 (153–156 (NKMD)) interacts with GTP. A G4 region spans residues 153 to 156 (NKMD). Position 165 is an N6,N6,N6-trimethyllysine; alternate; by EEF1AKMT3 (lysine 165). Lysine 165 carries the N6,N6-dimethyllysine; alternate; by EEF1AKMT3 modification. Lysine 165 carries the N6-acetyllysine; alternate modification. Lysine 165 is subject to N6-methyllysine; alternate; by EEF1AKMT3. Position 172 is an N6-acetyllysine (lysine 172). 194–196 (SGW) lines the GTP pocket. Positions 194-196 (SGW) are G5. Lysine 273 bears the N6-acetyllysine mark. Serine 300 bears the Phosphoserine; by TGFBR1 mark. A 5-glutamyl glycerylphosphorylethanolamine modification is found at glutamate 301. The residue at position 318 (lysine 318) is an N6,N6,N6-trimethyllysine; by EEF1AKMT2. Glutamate 374 bears the 5-glutamyl glycerylphosphorylethanolamine mark. A Glycyl lysine isopeptide (Lys-Gly) (interchain with G-Cter in ubiquitin) cross-link involves residue lysine 385. Lysine 392 carries the post-translational modification N6-acetyllysine; alternate. Lysine 392 carries the N6-succinyllysine; alternate modification. Threonine 432 bears the Phosphothreonine; by PASK mark. At lysine 439 the chain carries N6-acetyllysine.

The protein belongs to the TRAFAC class translation factor GTPase superfamily. Classic translation factor GTPase family. EF-Tu/EF-1A subfamily. As to quaternary structure, found in a nuclear export complex with XPO5, EEF1A1, Ran and aminoacylated tRNA. Interacts with PARP1 and TXK. Interacts with KARS1. May interact with ERGIC2. Interacts with IFIT1 (via TPR repeats 4-7). Interacts with DLC1, facilitating distribution to the membrane periphery and ruffles upon growth factor stimulation. Interacts with ZPR1; the interaction occurs in a epidermal growth factor (EGF)-dependent manner. Interacts with PPP1R16B. Interacts with SPHK1 and SPHK2; both interactions increase SPHK1 and SPHK2 kinase activity. Interacts with guanyl-nucleotide exchange factor EEF1B2. Interacts (via middle-region) with HTATIP2 (via N-terminus); the interaction is direct and competes with EEF1A1 binding to guanyl-nucleotide exchange factor EEF1B2, thereby inhibiting GDP for GTP exchange and reactivation of EEF1A1. Interacts with tRNA. ISGylated. In terms of processing, phosphorylated by TXK. Phosphorylation by PASK increases translation efficiency. Phosphorylated by ROCK2. Phosphorylation by TGFBR1 inhibits translation elongation. Post-translationally, trimethylated at Lys-79 by EEF1AKMT1. Methylated at Lys-165 by EEF1AKMT3, methylation by EEF1AKMT3 is dynamic as well as inducible by stress conditions, such as ER-stress, and plays a regulatory role on mRNA translation. Trimethylated at Lys-318 by EEF1AKMT2. Mono-, di-, and trimethylated at Lys-36 by EEF1AKMT4; trimethylated form is predominant. Methylation by EEF1AKMT4 contributes to the fine-tuning of translation rates for a subset of tRNAs. Trimethylated at Gly-2 by METTL13. Mono- and dimethylated at Lys-55 by METTL13; dimethylated form is predominant. Ubiquitinated at Lys-385 by RNF14 in response to ribosome collisions (ribosome stalling), leading to its degradation by the proteasome and rescue of stalled ribosomes.

It localises to the cytoplasm. It is found in the nucleus. The protein resides in the nucleolus. The protein localises to the cell membrane. It carries out the reaction GTP + H2O = GDP + phosphate + H(+). Functionally, translation elongation factor that catalyzes the GTP-dependent binding of aminoacyl-tRNA (aa-tRNA) to the A-site of ribosomes during the elongation phase of protein synthesis. Base pairing between the mRNA codon and the aa-tRNA anticodon promotes GTP hydrolysis, releasing the aa-tRNA from EEF1A1 and allowing its accommodation into the ribosome. The growing protein chain is subsequently transferred from the P-site peptidyl tRNA to the A-site aa-tRNA, extending it by one amino acid through ribosome-catalyzed peptide bond formation. Also plays a role in the positive regulation of IFNG transcription in T-helper 1 cells as part of an IFNG promoter-binding complex with TXK and PARP1. Also plays a role in cytoskeleton organization by promoting actin bundling. The chain is Elongation factor 1-alpha 1 (EEF1A1) from Equus caballus (Horse).